A 385-amino-acid chain; its full sequence is Glucose-fructose oxidoreductase domain-containing protein 2 (385 aa).

An N-terminal signal peptide occupies residues 1–25 (MKMLPGVGVFGTGSSARVLVPLLRA).

Belongs to the Gfo/Idh/MocA family.

Its subcellular location is the secreted. The protein localises to the extracellular space. It localises to the extracellular matrix. Its function is as follows. Promotes matrix assembly. This is Glucose-fructose oxidoreductase domain-containing protein 2 (GFOD2) from Homo sapiens (Human).